Consider the following 459-residue polypeptide: 23S rRNA (uracil-C(5))-methyltransferase RlmCD (459 aa).

A TRAM domain is found at 6–64 (PVEKNEYYDVTFEDLTHEGAGVAKVQGFPIFVPNALPEEKAQIKVTRVKKGFAFGRLIE). 4 residues coordinate [4Fe-4S] cluster: Cys-77, Cys-83, Cys-86, and Cys-166. S-adenosyl-L-methionine contacts are provided by Gln-290, Tyr-319, Glu-340, and Asp-388. Cys-415 acts as the Nucleophile in catalysis.

The protein belongs to the class I-like SAM-binding methyltransferase superfamily. RNA M5U methyltransferase family.

It carries out the reaction uridine(747) in 23S rRNA + S-adenosyl-L-methionine = 5-methyluridine(747) in 23S rRNA + S-adenosyl-L-homocysteine + H(+). It catalyses the reaction uridine(1939) in 23S rRNA + S-adenosyl-L-methionine = 5-methyluridine(1939) in 23S rRNA + S-adenosyl-L-homocysteine + H(+). Its function is as follows. Catalyzes the formation of 5-methyl-uridine at positions 747 (m5U747) and 1939 (m5U1939) in 23S rRNA. This is 23S rRNA (uracil-C(5))-methyltransferase RlmCD (rlmCD) from Bacillus subtilis (strain 168).